The sequence spans 410 residues: Aspartate aminotransferase (410 aa).

3 residues coordinate L-aspartate: Gly47, Trp135, and Asn185. The residue at position 249 (Lys249) is an N6-(pyridoxal phosphate)lysine. Residue Arg385 coordinates L-aspartate.

The protein belongs to the class-I pyridoxal-phosphate-dependent aminotransferase family. In terms of assembly, homodimer. It depends on pyridoxal 5'-phosphate as a cofactor.

The protein localises to the cytoplasm. It catalyses the reaction L-aspartate + 2-oxoglutarate = oxaloacetate + L-glutamate. It carries out the reaction L-2-aminoadipate + 2-oxoglutarate = 2-oxoadipate + L-glutamate. Catalyzes the reversible conversion of aspartate and 2-oxoglutarate to glutamate and oxaloacetate. Genetic evidence shows that this protein is involved in L-lysine catabolism. It may have 2-aminoadipate:2-oxoglutarate aminotransferase activity. The protein is Aspartate aminotransferase (aatB) of Rhizobium meliloti (strain 1021) (Ensifer meliloti).